The primary structure comprises 427 residues: Peptidase B (427 aa).

Mn(2+) is bound by residues K195 and D200. Residue K207 is part of the active site. Mn(2+)-binding residues include D218, D277, and E279. Residue R281 is part of the active site.

It belongs to the peptidase M17 family. Homohexamer. Mn(2+) is required as a cofactor.

Its subcellular location is the cytoplasm. The catalysed reaction is Release of an N-terminal amino acid, Xaa, from a peptide or arylamide. Xaa is preferably Glu or Asp but may be other amino acids, including Leu, Met, His, Cys and Gln.. Functionally, probably plays an important role in intracellular peptide degradation. In Escherichia coli (strain SE11), this protein is Peptidase B.